A 228-amino-acid chain; its full sequence is Flavin-dependent thymidylate synthase (228 aa).

Residues 1 to 217 form the ThyX domain; that stretch reads MEYKILDKGF…PWTFEAFLKF (217 aa). FAD-binding positions include Thr-55, 78-80, and Glu-86; that span reads RHR. DUMP contacts are provided by residues 75 to 78, 86 to 90, and Arg-156; these read QWFR and EASLR. The ThyX motif signature appears at 78-88; it reads RHRIGSFNEAS. FAD-binding positions include 172–174 and Asn-178; that span reads NAR. Position 183 (Arg-183) interacts with dUMP. Arg-183 (involved in ionization of N3 of dUMP, leading to its activation) is an active-site residue.

This sequence belongs to the thymidylate synthase ThyX family. In terms of assembly, homotetramer. Requires FAD as cofactor.

It carries out the reaction dUMP + (6R)-5,10-methylene-5,6,7,8-tetrahydrofolate + NADPH + H(+) = dTMP + (6S)-5,6,7,8-tetrahydrofolate + NADP(+). The protein operates within pyrimidine metabolism; dTTP biosynthesis. In terms of biological role, catalyzes the reductive methylation of 2'-deoxyuridine-5'-monophosphate (dUMP) to 2'-deoxythymidine-5'-monophosphate (dTMP) while utilizing 5,10-methylenetetrahydrofolate (mTHF) as the methyl donor, and NADPH and FADH(2) as the reductant. This Thermosipho africanus (strain TCF52B) protein is Flavin-dependent thymidylate synthase.